A 529-amino-acid chain; its full sequence is MSLNDYPQQVNKRRTFAIISHPDAGKTTITEKVLLYGNAIQTAGSVKGKGSQAHAKSDWMEMEKQRGISITTSVMQFPYNDCLVNLLDTPGHEDFSEDTYRTLTAVDSCLMVIDAAKGVEERTIKLMEVTRLRDTPILTFMNKLDRDIRDPMELLDEVESVLKIHCAPITWPIGCGKLFKGVYHLYKDETYLYQTGQGSTIQEVKIVKGLNNPELDNAVGDDLAQQLRDELELVKGASNEFDHELFIGGELTPVFFGTALGNFGVDHFLDGLTEWAPKPQPRQADTRIVESSEEKLTGFVFKIQANMDPKHRDRVAFMRVVSGKYEKGMKLKHVRIGKDVVISDALTFMAGDRAHAEEAYAGDIIGLHNHGTIQIGDTFTQGEDLKFTGIPNFAPELFRRIRLKDPLKQKQLLKGLVQLSEEGAVQVFRPMMNNDLIVGAVGVLQFDVVVSRLKTEYNVEAIYENVNVATARWVECADSKKFEEFKRKNEQNLALDGGDNLTYIAPTMVNLNLAQERYPDVTFFKTREH.

Positions 11-280 constitute a tr-type G domain; it reads NKRRTFAIIS…GLTEWAPKPQ (270 aa). GTP-binding positions include 20–27, 88–92, and 142–145; these read SHPDAGKT, DTPGH, and NKLD.

It belongs to the TRAFAC class translation factor GTPase superfamily. Classic translation factor GTPase family. PrfC subfamily.

The protein resides in the cytoplasm. In terms of biological role, increases the formation of ribosomal termination complexes and stimulates activities of RF-1 and RF-2. It binds guanine nucleotides and has strong preference for UGA stop codons. It may interact directly with the ribosome. The stimulation of RF-1 and RF-2 is significantly reduced by GTP and GDP, but not by GMP. The chain is Peptide chain release factor 3 from Mannheimia succiniciproducens (strain KCTC 0769BP / MBEL55E).